The following is a 406-amino-acid chain: Elongation factor Tu, chloroplastic (406 aa).

Positions 8 to 210 (KTHINIATIG…LLDSYIPKPK (203 aa)) constitute a tr-type G domain. GTP is bound by residues 17–24 (GHFNHGKT), 77–81 (DCPGH), and 132–135 (NKED). Thr-24 lines the Mg(2+) pocket.

It belongs to the TRAFAC class translation factor GTPase superfamily. Classic translation factor GTPase family. EF-Tu/EF-1A subfamily. As to quaternary structure, monomer.

It is found in the plastid. Its subcellular location is the chloroplast. The catalysed reaction is GTP + H2O = GDP + phosphate + H(+). Functionally, GTP hydrolase that promotes the GTP-dependent binding of aminoacyl-tRNA to the A-site of ribosomes during protein biosynthesis. The polypeptide is Elongation factor Tu, chloroplastic (tufA) (Chaetosphaeridium globosum (Charophycean green alga)).